Consider the following 429-residue polypeptide: Ribosomal RNA small subunit methyltransferase B (429 aa).

S-adenosyl-L-methionine is bound by residues 254 to 260 (CAAPGGK), D277, D303, and D322. C375 acts as the Nucleophile in catalysis.

Belongs to the class I-like SAM-binding methyltransferase superfamily. RsmB/NOP family.

Its subcellular location is the cytoplasm. It catalyses the reaction cytidine(967) in 16S rRNA + S-adenosyl-L-methionine = 5-methylcytidine(967) in 16S rRNA + S-adenosyl-L-homocysteine + H(+). In terms of biological role, specifically methylates the cytosine at position 967 (m5C967) of 16S rRNA. This is Ribosomal RNA small subunit methyltransferase B from Escherichia coli O17:K52:H18 (strain UMN026 / ExPEC).